The following is a 485-amino-acid chain: Aerolysin-5 (485 aa).

Positions M1–A23 are cleaved as a signal peptide. 2 cysteine pairs are disulfide-bonded: C42/C98 and C182/C187. The interval W68–Y84 is interaction with host N-linked glycan. A part of the transmembrane beta-barrel after proteolytic activation of the toxin and insertion into the host membrane region spans residues Y256–W288. Residues R346–H355 are interaction with glycans from host GPI-anchor. Positions A446–A485 are excised as a propeptide.

The protein belongs to the aerolysin family. In terms of assembly, homodimer in solution; homoheptamer in the host membrane. After binding to GPI-anchored proteins in target membranes and proteolytic removal of the C-terminal propeptide, the protein assembles into a heptameric pre-pore complex. A further conformation change leads to insertion into the host membrane. Post-translationally, proteolytic cleavage and subsequent release of the propeptide trigger a major conformation change, leading to the formation of a heptameric pre-pore that then inserts into the host membrane.

Its subcellular location is the secreted. It is found in the host cell membrane. Secreted, cytolytic toxin that forms pores in host membranes after proteolytic removal of a C-terminal propeptide, leading to destruction of the membrane permeability barrier and cell death. The pores are formed by transmembrane beta-strands and are approximately 3 nm in diameter. In Aeromonas hydrophila, this protein is Aerolysin-5 (ahh5).